Here is a 175-residue protein sequence, read N- to C-terminus: Shikimate kinase (175 aa).

Glycine 14–threonine 19 provides a ligand contact to ATP. Serine 18 provides a ligand contact to Mg(2+). Aspartate 36, arginine 60, and glycine 82 together coordinate substrate. Arginine 120 serves as a coordination point for ATP. Residue arginine 140 participates in substrate binding. Residue glutamine 157 participates in ATP binding.

Belongs to the shikimate kinase family. In terms of assembly, monomer. Mg(2+) is required as a cofactor.

It is found in the cytoplasm. It carries out the reaction shikimate + ATP = 3-phosphoshikimate + ADP + H(+). The protein operates within metabolic intermediate biosynthesis; chorismate biosynthesis; chorismate from D-erythrose 4-phosphate and phosphoenolpyruvate: step 5/7. In terms of biological role, catalyzes the specific phosphorylation of the 3-hydroxyl group of shikimic acid using ATP as a cosubstrate. The sequence is that of Shikimate kinase from Pasteurella multocida (strain Pm70).